The primary structure comprises 181 residues: Adenine phosphoribosyltransferase (181 aa).

This sequence belongs to the purine/pyrimidine phosphoribosyltransferase family. As to quaternary structure, homodimer.

It localises to the cytoplasm. It catalyses the reaction AMP + diphosphate = 5-phospho-alpha-D-ribose 1-diphosphate + adenine. It participates in purine metabolism; AMP biosynthesis via salvage pathway; AMP from adenine: step 1/1. Functionally, catalyzes a salvage reaction resulting in the formation of AMP, that is energically less costly than de novo synthesis. This Shewanella loihica (strain ATCC BAA-1088 / PV-4) protein is Adenine phosphoribosyltransferase.